The chain runs to 202 residues: Pectinesterase inhibitor 11 (202 aa).

The N-terminal stretch at 1 to 21 is a signal peptide; it reads MAKQIFYTLFLFLLSTAILTA. A disulfide bridge links C43 with C52. N76 carries N-linked (GlcNAc...) asparagine glycosylation. C109 and C160 are oxidised to a cystine.

It belongs to the PMEI family.

It localises to the secreted. It is found in the extracellular space. The protein localises to the apoplast. Functionally, pectin methylesterase (PME) inhibitor involved in the maintenance of cell wall integrity in response to necrotrophic pathogens. Modulates PME activity and pectin methylesterification during infection by Botrytis cinerea and contributes to resistance against the pathogen. In Arabidopsis thaliana (Mouse-ear cress), this protein is Pectinesterase inhibitor 11.